The following is a 452-amino-acid chain: Bifunctional protein GlmU (452 aa).

The segment at 1–226 (MSLAVVILAA…GWEVDGVNDR (226 aa)) is pyrophosphorylase. UDP-N-acetyl-alpha-D-glucosamine-binding positions include 8-11 (LAAG), Lys22, Gln73, 78-79 (GT), 99-101 (YGD), Gly136, Glu151, Asn166, and Asn224. Asp101 contributes to the Mg(2+) binding site. Asn224 is a Mg(2+) binding site. Positions 227 to 247 (VQLARLERIYQQAQAETLMRD) are linker. The segment at 248–452 (GVTLLDPSRL…VANWQRPKKG (205 aa)) is N-acetyltransferase. Arg330 and Lys348 together coordinate UDP-N-acetyl-alpha-D-glucosamine. His360 serves as the catalytic Proton acceptor. UDP-N-acetyl-alpha-D-glucosamine is bound by residues Tyr363 and Asn374. Residues Ala377, 383–384 (NY), Ser402, Ala420, and Arg437 contribute to the acetyl-CoA site.

In the N-terminal section; belongs to the N-acetylglucosamine-1-phosphate uridyltransferase family. This sequence in the C-terminal section; belongs to the transferase hexapeptide repeat family. In terms of assembly, homotrimer. The cofactor is Mg(2+).

It localises to the cytoplasm. The enzyme catalyses alpha-D-glucosamine 1-phosphate + acetyl-CoA = N-acetyl-alpha-D-glucosamine 1-phosphate + CoA + H(+). The catalysed reaction is N-acetyl-alpha-D-glucosamine 1-phosphate + UTP + H(+) = UDP-N-acetyl-alpha-D-glucosamine + diphosphate. It participates in nucleotide-sugar biosynthesis; UDP-N-acetyl-alpha-D-glucosamine biosynthesis; N-acetyl-alpha-D-glucosamine 1-phosphate from alpha-D-glucosamine 6-phosphate (route II): step 2/2. It functions in the pathway nucleotide-sugar biosynthesis; UDP-N-acetyl-alpha-D-glucosamine biosynthesis; UDP-N-acetyl-alpha-D-glucosamine from N-acetyl-alpha-D-glucosamine 1-phosphate: step 1/1. Its pathway is bacterial outer membrane biogenesis; LPS lipid A biosynthesis. In terms of biological role, catalyzes the last two sequential reactions in the de novo biosynthetic pathway for UDP-N-acetylglucosamine (UDP-GlcNAc). The C-terminal domain catalyzes the transfer of acetyl group from acetyl coenzyme A to glucosamine-1-phosphate (GlcN-1-P) to produce N-acetylglucosamine-1-phosphate (GlcNAc-1-P), which is converted into UDP-GlcNAc by the transfer of uridine 5-monophosphate (from uridine 5-triphosphate), a reaction catalyzed by the N-terminal domain. This is Bifunctional protein GlmU from Alcanivorax borkumensis (strain ATCC 700651 / DSM 11573 / NCIMB 13689 / SK2).